The following is a 244-amino-acid chain: Agamous-like MADS-box protein MADS3 (244 aa).

The MADS-box domain maps to 1-61 (MGRGRVELKR…GKLYEFGSAG (61 aa)). The region spanning 85-175 (TQSWYQEVSK…KLKLEAEGQS (91 aa)) is the K-box domain. The disordered stretch occupies residues 180-206 (QGSWNPSTATAGNSSFPVHPSQSNPMD). Residues 181–204 (GSWNPSTATAGNSSFPVHPSQSNP) are compositionally biased toward polar residues.

As to expression, expressed in flowers and seeds.

It is found in the nucleus. Its function is as follows. Probable transcription factor involved in flower development. This chain is Agamous-like MADS-box protein MADS3, found in Vitis vinifera (Grape).